Here is a 366-residue protein sequence, read N- to C-terminus: uncharacterized protein (366 aa).

Positions 1 to 135 (MNQTGRTIGG…PPKNVDTIDK (135 aa)) are disordered. The span at 26–38 (PSEDRVSSRDETP) shows a compositional bias: basic and acidic residues. Residue serine 69 is modified to Phosphoserine. Threonine 76 carries the post-translational modification Phosphothreonine. Lysine 78 participates in a covalent cross-link: Glycyl lysine isopeptide (Lys-Gly) (interchain with G-Cter in ubiquitin). The span at 97 to 108 (QHNHHHHRRTSH) shows a compositional bias: basic residues. A Glycyl lysine isopeptide (Lys-Gly) (interchain with G-Cter in ubiquitin) cross-link involves residue lysine 187. Threonine 189 carries the post-translational modification Phosphothreonine. A Glycyl lysine isopeptide (Lys-Gly) (interchain with G-Cter in ubiquitin) cross-link involves residue lysine 242. Serine 288 and serine 294 each carry phosphoserine. The disordered stretch occupies residues 313–366 (THSGHLEQKDVDDNRTSVPVTATQGSGHEDVVKKENTGNKLLRRVKSLKTSKKH). Basic and acidic residues predominate over residues 316-327 (GHLEQKDVDDNR). Positions 328–338 (TSVPVTATQGS) are enriched in polar residues. Positions 339 to 349 (GHEDVVKKENT) are enriched in basic and acidic residues. Basic residues predominate over residues 353-366 (LLRRVKSLKTSKKH). At serine 359 the chain carries Phosphoserine.

It belongs to the pal1 family.

It localises to the cytoplasm. The protein resides in the nucleus. This is an uncharacterized protein from Saccharomyces cerevisiae (strain ATCC 204508 / S288c) (Baker's yeast).